Consider the following 241-residue polypeptide: UDP-2,3-diacylglucosamine hydrolase (241 aa).

Asp8, His10, Asp41, Asn79, and His114 together coordinate Mn(2+). A substrate-binding site is contributed by 79–80 (NR). Substrate contacts are provided by Asp122, Ser160, Lys167, and His195. Mn(2+) contacts are provided by His195 and His197.

Belongs to the LpxH family. It depends on Mn(2+) as a cofactor.

Its subcellular location is the cell inner membrane. The enzyme catalyses UDP-2-N,3-O-bis[(3R)-3-hydroxytetradecanoyl]-alpha-D-glucosamine + H2O = 2-N,3-O-bis[(3R)-3-hydroxytetradecanoyl]-alpha-D-glucosaminyl 1-phosphate + UMP + 2 H(+). Its pathway is glycolipid biosynthesis; lipid IV(A) biosynthesis; lipid IV(A) from (3R)-3-hydroxytetradecanoyl-[acyl-carrier-protein] and UDP-N-acetyl-alpha-D-glucosamine: step 4/6. Its function is as follows. Hydrolyzes the pyrophosphate bond of UDP-2,3-diacylglucosamine to yield 2,3-diacylglucosamine 1-phosphate (lipid X) and UMP by catalyzing the attack of water at the alpha-P atom. Involved in the biosynthesis of lipid A, a phosphorylated glycolipid that anchors the lipopolysaccharide to the outer membrane of the cell. This chain is UDP-2,3-diacylglucosamine hydrolase, found in Azotobacter vinelandii (strain DJ / ATCC BAA-1303).